Here is a 1921-residue protein sequence, read N- to C-terminus: Disks large homolog 5 (1921 aa).

One can recognise a CARD domain in the interval 1-90; it reads MEPQRRELLA…HLLPILYLNG (90 aa). Residues 116 to 143 form a disordered region; that stretch reads ESSSSLSSVGTTGKAPSPPPLLTEQQAN. Residues 139–601 are a coiled coil; it reads EQQANDTVEN…KEARFRQLMA (463 aa). Phosphoserine is present on residues Ser-264 and Ser-295. PDZ domains lie at 620–710 and 705–796; these read VVEF…RRRK and VVRR…LKVF. The segment at 857 to 898 is disordered; sequence ELGHSGGSSSFLHKPFSGSSSPVSPQACPSTSERSLNSFRSD. Residues 873–898 show a composition bias toward polar residues; it reads SGSSSPVSPQACPSTSERSLNSFRSD. Ser-900 carries the post-translational modification Phosphoserine. Residues 930–1121 form a disordered region; it reads EVPLDKIDPE…RPKSAPSFRP (192 aa). Thr-984 is modified (phosphothreonine). Ser-1000 carries the post-translational modification Phosphoserine. At Thr-1011 the chain carries Phosphothreonine. The segment covering 1017–1030 has biased composition (basic and acidic residues); that stretch reads RRSDSIKFQHRLET. The residue at position 1021 (Ser-1021) is a Phosphoserine. Residues 1045–1055 are compositionally biased toward pro residues; sequence TSPPSAPPPSM. The residue at position 1183 (Thr-1183) is a Phosphothreonine. 3 disordered regions span residues 1204 to 1227, 1243 to 1266, and 1280 to 1343; these read VLPC…SVQH, YSEM…SSSN, and PRYP…KDRP. Ser-1209 is subject to Phosphoserine. The span at 1217–1227 shows a compositional bias: polar residues; sequence GSQSLSPSVQH. Residues 1252-1266 show a composition bias toward low complexity; that stretch reads SNSLPSSARLGSSSN. Phosphoserine is present on Ser-1263. Polar residues predominate over residues 1292–1324; the sequence is GSLSHSECSTPPRSPLNIDTLSSCSQPQTTAST. Ser-1334 is modified (phosphoserine). Residues 1350–1429 form the PDZ 3 domain; it reads HVKVQKGSEP…TITILAQYNP (80 aa). Composition is skewed to polar residues over residues 1434 to 1443, 1450 to 1460, and 1483 to 1495; these read LNSHSRSSSH, PHSTLQGSSAG, and AKQS…SVGD. Residues 1434–1501 form a disordered region; that stretch reads LNSHSRSSSH…SVGDTTKKTP (68 aa). Residues 1504 to 1585 enclose the PDZ 4 domain; that stretch reads RIVFIKKSQL…SLRLKVQYRH (82 aa). The 69-residue stretch at 1596–1664 folds into the SH3 domain; sequence GDSFYIRALY…PSKYVMDQEF (69 aa). Ser-1669 carries the phosphoserine modification. The Guanylate kinase-like domain occupies 1724 to 1907; it reads DSVSLAYQRV…ICTQILAMVS (184 aa).

It belongs to the MAGUK family. Interacts with MPP1. Interacts with CTNNB1 and with the third SH3 domain of SORBS3 to form a ternary complex. Interacts (via coiled-coil domain) with MARK3. Interacts (via PDZ domain 3) with STK3/MST2 and STK4/MST1. Interacts with SCRIB. Interacts with CTNB1. Interacts with SMO and (via PDZ4 or guanylate kinase-like domain) with KIF7. Brain (at protein level).

The protein resides in the cell junction. The protein localises to the cell membrane. It localises to the postsynaptic density. Its subcellular location is the cytoplasm. It is found in the cytoskeleton. The protein resides in the cilium basal body. Acts as a regulator of the Hippo signaling pathway. Negatively regulates the Hippo signaling pathway by mediating the interaction of MARK3 with STK3/4, bringing them together to promote MARK3-dependent hyperphosphorylation and inactivation of STK3 kinase activity toward LATS1. Positively regulates the Hippo signaling by mediating the interaction of SCRIB with STK4/MST1 and LATS1 which is important for the activation of the Hippo signaling pathway. Involved in regulating cell proliferation, maintenance of epithelial polarity, epithelial-mesenchymal transition (EMT), cell migration and invasion. Plays an important role in dendritic spine formation and synaptogenesis in cortical neurons; regulates synaptogenesis by enhancing the cell surface localization of N-cadherin. Acts as a positive regulator of hedgehog (Hh) signaling pathway. Plays a critical role in the early point of the SMO activity cycle by interacting with SMO at the ciliary base to induce the accumulation of KIF7 and GLI2 at the ciliary tip for GLI2 activation. The chain is Disks large homolog 5 (Dlg5) from Mus musculus (Mouse).